The following is a 1010-amino-acid chain: Translation initiation factor IF-2 (1010 aa).

Disordered regions lie at residues 54-350 (KGLA…FEDD) and 364-420 (PSFT…RPES). Residues 57–70 (ASSTSKNSTGQRES) show a composition bias toward polar residues. A compositionally biased stretch (pro residues) spans 112–124 (ISPPRPPVKPLVA). A compositionally biased stretch (polar residues) spans 145–155 (HSPSVKETPTE). Positions 200 to 258 (DRPRGEKRERGESENAPSPERRVGLAKPEKPTLNRKPDGKSPKLAEPAREVRETVELKR) are enriched in basic and acidic residues. Over residues 378-389 (TAKAAPPGTPTA) the composition is skewed to low complexity. A compositionally biased stretch (basic and acidic residues) spans 406–419 (KSERQEPQEEKRPE). The region spanning 502–675 (RRPPVVTIMG…LLVAEVEELV (174 aa)) is the tr-type G domain. Residues 511 to 518 (GHVDHGKT) form a G1 region. 511–518 (GHVDHGKT) is a binding site for GTP. The segment at 536 to 540 (GITQH) is G2. The segment at 561–564 (DTPG) is G3. GTP-binding positions include 561–565 (DTPGH) and 615–618 (NKVD). The G4 stretch occupies residues 615-618 (NKVD). Positions 651-653 (SAL) are G5.

Belongs to the TRAFAC class translation factor GTPase superfamily. Classic translation factor GTPase family. IF-2 subfamily.

It is found in the cytoplasm. One of the essential components for the initiation of protein synthesis. Protects formylmethionyl-tRNA from spontaneous hydrolysis and promotes its binding to the 30S ribosomal subunits. Also involved in the hydrolysis of GTP during the formation of the 70S ribosomal complex. In Microcystis aeruginosa (strain NIES-843 / IAM M-2473), this protein is Translation initiation factor IF-2.